The primary structure comprises 198 residues: Probable nicotinate-nucleotide adenylyltransferase (198 aa).

It belongs to the NadD family.

The catalysed reaction is nicotinate beta-D-ribonucleotide + ATP + H(+) = deamido-NAD(+) + diphosphate. Its pathway is cofactor biosynthesis; NAD(+) biosynthesis; deamido-NAD(+) from nicotinate D-ribonucleotide: step 1/1. Functionally, catalyzes the reversible adenylation of nicotinate mononucleotide (NaMN) to nicotinic acid adenine dinucleotide (NaAD). The chain is Probable nicotinate-nucleotide adenylyltransferase from Chlorobium limicola (strain DSM 245 / NBRC 103803 / 6330).